Consider the following 195-residue polypeptide: Cytochrome c biogenesis ATP-binding export protein CcmA (195 aa).

In terms of domain architecture, ABC transporter spans 1–195 (MLSLHQLQFN…IKSAQILQLV (195 aa)). ATP is bound at residue 33-40 (GANGSGKS).

Belongs to the ABC transporter superfamily. CcmA exporter (TC 3.A.1.107) family. In terms of assembly, the complex is composed of two ATP-binding proteins (CcmA) and two transmembrane proteins (CcmB).

It localises to the cell inner membrane. The catalysed reaction is heme b(in) + ATP + H2O = heme b(out) + ADP + phosphate + H(+). Part of the ABC transporter complex CcmAB involved in the biogenesis of c-type cytochromes; once thought to export heme, this seems not to be the case, but its exact role is uncertain. Responsible for energy coupling to the transport system. The chain is Cytochrome c biogenesis ATP-binding export protein CcmA from Rickettsia felis (strain ATCC VR-1525 / URRWXCal2) (Rickettsia azadi).